A 102-amino-acid chain; its full sequence is Putative pterin-4-alpha-carbinolamine dehydratase (102 aa).

Belongs to the pterin-4-alpha-carbinolamine dehydratase family.

The enzyme catalyses (4aS,6R)-4a-hydroxy-L-erythro-5,6,7,8-tetrahydrobiopterin = (6R)-L-erythro-6,7-dihydrobiopterin + H2O. The polypeptide is Putative pterin-4-alpha-carbinolamine dehydratase (Burkholderia multivorans (strain ATCC 17616 / 249)).